Here is a 74-residue protein sequence, read N- to C-terminus: Brevinin-2Tb (74 aa).

A signal peptide spans 1 to 22 (MFTMKKSLLLFFFLGTISLSLC). Positions 23 to 40 (QEERNADEDDGEMTEEEK) are excised as a propeptide. A disulfide bridge links Cys68 with Cys74.

Belongs to the frog skin active peptide (FSAP) family. Brevinin subfamily. As to expression, expressed by the skin glands.

The protein resides in the secreted. Antimicrobial peptide. The sequence is that of Brevinin-2Tb from Rana temporaria (European common frog).